The sequence spans 192 residues: uncharacterized protein (192 aa).

The protein to R.meliloti RA0936 and y4nF.

This is an uncharacterized protein from Sinorhizobium fredii (strain NBRC 101917 / NGR234).